A 416-amino-acid chain; its full sequence is Probable protein phosphatase 2C 75 (416 aa).

Disordered stretches follow at residues 1 to 20 (MTEIYRTISTGRGDDVSPTK) and 32 to 51 (RRQAAVFGEPSSSRNRDRTD). The 304-residue stretch at 108–411 (LYGIVSVMGR…DNISVVVIDL (304 aa)) folds into the PPM-type phosphatase domain. Residues Asp-149, Gly-150, Asp-337, and Asp-402 each coordinate Mn(2+).

Belongs to the PP2C family. The cofactor is Mg(2+). Requires Mn(2+) as cofactor.

The enzyme catalyses O-phospho-L-seryl-[protein] + H2O = L-seryl-[protein] + phosphate. The catalysed reaction is O-phospho-L-threonyl-[protein] + H2O = L-threonyl-[protein] + phosphate. In terms of biological role, negative regulator of abscisic acid (ABA) responses during seed germination. The polypeptide is Probable protein phosphatase 2C 75 (AHG1) (Arabidopsis thaliana (Mouse-ear cress)).